Here is a 299-residue protein sequence, read N- to C-terminus: Hemolysin C homolog (299 aa).

CBS domains are found at residues 80 to 142 (MVPR…NGRL) and 145 to 202 (LIRK…IDDE).

This sequence belongs to the UPF0053 family. Hemolysin C subfamily.

The protein is Hemolysin C homolog (tlyC) of Rickettsia massiliae (strain Mtu5).